The following is a 36-amino-acid chain: Pancreatic polypeptide (36 aa).

F36 carries the post-translational modification Phenylalanine amide.

Belongs to the NPY family.

The protein localises to the secreted. In terms of biological role, hormone secreted by pancreatic cells that acts as a regulator of pancreatic and gastrointestinal functions. The sequence is that of Pancreatic polypeptide (ppy) from Aquarana catesbeiana (American bullfrog).